Consider the following 532-residue polypeptide: MGAEIDSRIEDEQKLVDDMLKVLPEKAARNRRKHIVVRNCSTEQHIEADDKVIPGILTNRGCAFAGTKGVVFGPIKDMVHLVHGPIGCAFYTWGTRRNFAKAEEGGDNFMNYCVCTDMKETDIVFGGEKKLKKAIDEVVKIFHPEAITICATCPVGLIGDDIESVAREAEKEHGIKVIPARCEGYRGVSQSAGHHIASNALMEHLIGTEEIKSPTPFDINVFGEYNIGGDLWEVKPIFEKIGYRIVSSLTGDGSFHRISQAHQAKLSILVCHRSINYTNRMMEEKYGVPWLKVNYIGTKGTEKLLRKMAEFFDDPELTRKTEEVIAEEKAKYAEDIEKYRKKLKGKTAFIYAGGSRSHHYINLFEELGMKVIAAGYQFAHRDDYEGRQIIPQIKEKALGSILEDVHYERDENVKPTVSPERIEELKTKIGLMDYKGLFPDAEDGTIVIDDLNHHETEVLVKTLKPDIFCSGIKDKYWAQKPWSPSRQIHSYDYSGRYTGFSGVLNFARDIDMALHSPTWKFIRPPWKAENVE.

C62, C88, and C153 together coordinate [8Fe-7S] cluster. C271 and H489 together coordinate [7Fe-Mo-9S-C-homocitryl] cluster.

It belongs to the NifD/NifK/NifE/NifN family. In terms of assembly, tetramer of two alpha and two beta chains. Forms complex with the iron protein (nitrogenase component 2). It depends on [8Fe-7S] cluster as a cofactor. [7Fe-Mo-9S-C-homocitryl] cluster is required as a cofactor.

It catalyses the reaction N2 + 8 reduced [2Fe-2S]-[ferredoxin] + 16 ATP + 16 H2O = H2 + 8 oxidized [2Fe-2S]-[ferredoxin] + 2 NH4(+) + 16 ADP + 16 phosphate + 6 H(+). Functionally, this molybdenum-iron protein is part of the nitrogenase complex that catalyzes the key enzymatic reactions in nitrogen fixation. The sequence is that of Nitrogenase molybdenum-iron protein alpha chain (nifD2) from Methanosarcina barkeri.